Here is a 395-residue protein sequence, read N- to C-terminus: Mitogen-activated protein kinase 6 (395 aa).

A disordered region spans residues 1–35 (MDGGSGQPAADTEMTEAPGGFPAAAPSPQMPGIEN). Positions 17–27 (APGGFPAAAPS) are enriched in low complexity. Residues 63–348 (KPPIMPIGKG…VLDALAHPYL (286 aa)) form the Protein kinase domain. Residues 69-77 (IGKGAYGIV) and K92 each bind ATP. The active-site Proton acceptor is D189. The residue at position 221 (T221) is a Phosphothreonine. Residues 221-223 (TEY) carry the TXY motif. Position 223 is a phosphotyrosine (Y223). Residue T226 is modified to Phosphothreonine.

This sequence belongs to the protein kinase superfamily. CMGC Ser/Thr protein kinase family. MAP kinase subfamily. Interacts with MEKK1, MKK1 and MKK2. May form a ternary complex with MEKK1 and MKK1 or MKK2. Interacts with NDPK2, AP2C1, MKP1 and PTP1. Interacts with DSPTP1B/MKP2, especially during HR-like responses triggered by fungal elicitors. Interacts with MKK4, MKK5 and MKK6. Binds to LIP5. Interacts with VQ4 and IKU1/VQ14. Interacts with RACK1A, RACK1B and RACK1C. Interacts with PTP1. Interacts with FLZ9. Binds to BASL and YDA. Dually phosphorylated on Thr-221 and Tyr-223, which activates the enzyme. Dephosphorylated by DSPTP1B/MKP2.

The protein localises to the cytoplasm. It is found in the nucleus. Its subcellular location is the cell cortex. The enzyme catalyses L-seryl-[protein] + ATP = O-phospho-L-seryl-[protein] + ADP + H(+). It carries out the reaction L-threonyl-[protein] + ATP = O-phospho-L-threonyl-[protein] + ADP + H(+). Its activity is regulated as follows. Activated by threonine and tyrosine phosphorylation. Activated by the MAP kinase kinases MKK2, MKK3, MKK4, MKK5, MKK7 and MKK9. Activated in response to touch, wounding, low temperature, low humidity, salt stress, hydrogen peroxide, ozone, ACC (an ethylene precursor), jasmonic acid (JA), mastoparan and UVC. Activated in response to elicitors: oligogalacturonides, hexameric chitin fragments, fungal xylanase, and the bacterial flagellin and harpin. Activated upon Pseudomonas syringae pv. tomato DC3000 infection. Repressed by the protein phosphatase 2C AP2C1 and the protein-tyrosine-phosphatases MKP1 and PTP1. Repressed by DSPTP1B/MKP2-mediated dephosphorylation. Activated by polarized BASL. Triggered by MKKK20 in response to various abiotic stresses, including osmotic stress, cold and reactive oxygen species (ROS). Activated by MKK5 in response to abscisic acid (ABA). Its function is as follows. Mitogen-activated protein kinase (MAPK) which regulates abscisic acid (ABA) responses in a MAPKKK20-MKK5-MPK6 cascade involved in root growth (e.g. root cell division and elongation) and stomatal response. Involved in oxidative stress-mediated signaling cascade (such as ozone). Involved in the innate immune MAP kinase signaling cascade (MEKK1, MKK4/MKK5 and MPK3/MPK6) downstream of bacterial flagellin receptor FLS2. May be involved in hypersensitive response (HR)-mediated signaling cascade by modulating LIP5 phosphorylation and subsequent multivesicular bodies (MVBs) trafficking. May phosphorylate regulators of WRKY transcription factors. Phosphorylates 1-aminocyclopropane-1-carboxylic acid synthases (ACS2 and ACS6) and may be involved in the regulation of bacterial elicitor flagellin-induced ethylene production. Regulates locally gene-mediated and basal resistance response to certain pathogens. May be involved in the cold and salinity stress-mediated MAP kinase signaling cascade (MEKK1, MKK1/MKK2 and MPK4/MPK6). MKK1-MPK6 module mediates abscisic acid (ABA)-dependent CAT1 expression with H(2)O(2) production and response to drought and salt stress. MKK1-MPK6 module is also involved in sugar signaling during the process of seed germination. MKK3-MPK6 module plays an important role in the jasmonate signal transduction pathway through the negative regulation of MYC2/JIN1 expression. MKK9-MPK3/MPK6 module phosphorylates and activates EIN3, leading to the promotion of EIN3-mediated transcription in ethylene signaling. MPK3/MPK6 cascade regulates camalexin synthesis through transcriptional regulation of the biosynthetic genes after pathogen infection. MKK9-MPK6 module positively regulates leaf senescence. YDA-MKK4/MKK5-MPK3/MPK6 module regulates stomatal cell fate before the guard mother cell (GMC) is specified. When activated, reinforces the feedback loop by phosphorylating BASL, and inhibits stomatal fate by phosphorylating SPCH. This MAPK cascade also functions downstream of the ER receptor in regulating coordinated local cell proliferation, which shapes the morphology of plant organs. This chain is Mitogen-activated protein kinase 6, found in Arabidopsis thaliana (Mouse-ear cress).